The primary structure comprises 596 residues: Nitrite reductase (596 aa).

The N-terminal stretch at 1 to 29 is a signal peptide; it reads MRQRTPFARPGLLASAALALVLGPLAASA. The N-terminal tail stretch occupies residues 30–76; sequence QEQVAPPKDPAAALEDHKTRTDNRYEPSLDNLAQQDVAAPGAPEGVS. Histidine 46 is a heme c binding site. The heme d1 site is built by tyrosine 54 and serine 57. The 86-residue stretch at 77-162 folds into the Cytochrome c domain; the sequence is ALSDAQYNEA…ANYLLLDPAA (86 aa). Cysteine 94, cysteine 97, histidine 98, lysine 108, and tyrosine 122 together coordinate heme c. Residues tryptophan 138, arginine 203, histidine 229, arginine 232, arginine 245, arginine 272, tyrosine 292, arginine 420, glutamine 536, and threonine 583 each coordinate heme d1. A D1-heme domain region spans residues 163–596; it reads PPEFGMKEMR…NVYNTMTDTY (434 aa).

Homodimer. The cofactor is heme c. Heme is required as a cofactor.

Its subcellular location is the periplasm. It carries out the reaction nitric oxide + Fe(III)-[cytochrome c] + H2O = Fe(II)-[cytochrome c] + nitrite + 2 H(+). The enzyme catalyses A + NH4(+) + H2O = hydroxylamine + AH2 + H(+). This chain is Nitrite reductase (nirS), found in Paracoccus pantotrophus (Thiosphaera pantotropha).